The following is a 416-amino-acid chain: Putative L-glutamine:3-amino-2,3-dideoxy-scyllo-inosose aminotransferase (416 aa).

At Lys199 the chain carries N6-(pyridoxal phosphate)lysine.

It belongs to the DegT/DnrJ/EryC1 family. L-glutamine:2-deoxy-scyllo-inosose/scyllo-inosose aminotransferase subfamily. Requires pyridoxal 5'-phosphate as cofactor.

The catalysed reaction is 3-amino-2,3-dideoxy-scyllo-inosose + L-glutamine = 2-deoxystreptamine + 2-oxoglutaramate. The protein operates within metabolic intermediate biosynthesis; 2-deoxystreptamine biosynthesis; 2-deoxystreptamine from D-glucose 6-phosphate: step 4/4. It participates in antibiotic biosynthesis; tobramycin biosynthesis. In terms of biological role, catalyzes the transamination of 3-amino-2,3-dideoxy-scyllo-inosose (amino-DOI) into 2-deoxystreptamine (DOS). The chain is Putative L-glutamine:3-amino-2,3-dideoxy-scyllo-inosose aminotransferase (tobS2) from Streptoalloteichus tenebrarius (strain ATCC 17920 / DSM 40477 / JCM 4838 / CBS 697.72 / NBRC 16177 / NCIMB 11028 / NRRL B-12390 / A12253. 1 / ISP 5477) (Streptomyces tenebrarius).